The following is a 160-amino-acid chain: Troponin C, skeletal muscle (160 aa).

Position 2 is an N-acetylthreonine (T2). EF-hand domains are found at residues 15 to 50 (EMIA…LGQT), 51 to 86 (PTKE…QMKE), 91 to 126 (KSEE…SGEH), and 127 to 160 (VTDE…EGVQ). Ca(2+) is bound by residues D28, D30, D34, E39, D64, D66, S68, T70, E75, D104, N106, D108, Y110, E115, D140, N142, D144, R146, and E151.

Belongs to the troponin C family.

Functionally, troponin is the central regulatory protein of striated muscle contraction. Tn consists of three components: Tn-I which is the inhibitor of actomyosin ATPase, Tn-T which contains the binding site for tropomyosin and Tn-C. The binding of calcium to Tn-C abolishes the inhibitory action of Tn on actin filaments. The sequence is that of Troponin C, skeletal muscle (TNNC2) from Oryctolagus cuniculus (Rabbit).